The primary structure comprises 92 residues: Cell division protein FtsL (92 aa).

The Cytoplasmic segment spans residues Met-1–Arg-3. Residues Ile-4–Thr-21 form a helical membrane-spanning segment. Residues Ser-22–Gln-92 lie on the Periplasmic side of the membrane.

Belongs to the FtsL family. As to quaternary structure, part of a complex composed of FtsB, FtsL and FtsQ.

The protein resides in the cell inner membrane. Essential cell division protein. May link together the upstream cell division proteins, which are predominantly cytoplasmic, with the downstream cell division proteins, which are predominantly periplasmic. The chain is Cell division protein FtsL from Bordetella pertussis (strain Tohama I / ATCC BAA-589 / NCTC 13251).